We begin with the raw amino-acid sequence, 301 residues long: Sulfate adenylyltransferase subunit 2 (301 aa).

The interval 282-301 (RLIDRDEAGSMEKKKREGYF) is disordered.

It belongs to the PAPS reductase family. CysD subfamily. Heterodimer composed of CysD, the smaller subunit, and CysN.

It carries out the reaction sulfate + ATP + H(+) = adenosine 5'-phosphosulfate + diphosphate. Its pathway is sulfur metabolism; hydrogen sulfide biosynthesis; sulfite from sulfate: step 1/3. Functionally, with CysN forms the ATP sulfurylase (ATPS) that catalyzes the adenylation of sulfate producing adenosine 5'-phosphosulfate (APS) and diphosphate, the first enzymatic step in sulfur assimilation pathway. APS synthesis involves the formation of a high-energy phosphoric-sulfuric acid anhydride bond driven by GTP hydrolysis by CysN coupled to ATP hydrolysis by CysD. This is Sulfate adenylyltransferase subunit 2 from Chelativorans sp. (strain BNC1).